A 144-amino-acid polypeptide reads, in one-letter code: Large ribosomal subunit protein uL16 (144 aa).

This sequence belongs to the universal ribosomal protein uL16 family. Part of the 50S ribosomal subunit.

In terms of biological role, binds 23S rRNA and is also seen to make contacts with the A and possibly P site tRNAs. The protein is Large ribosomal subunit protein uL16 of Natranaerobius thermophilus (strain ATCC BAA-1301 / DSM 18059 / JW/NM-WN-LF).